A 264-amino-acid chain; its full sequence is Occludin/ELL domain-containing protein 1 (264 aa).

Residues 1–10 are compositionally biased toward polar residues; sequence MHNPDGSASP. The segment at 1–112 is disordered; it reads MHNPDGSASP…QPGPHKAKTK (112 aa). Positions 96-105 are enriched in pro residues; sequence PRPPCQPQPG. One can recognise an OCEL domain in the interval 147–257; sequence PDYELKYPPV…QIQKFDDQGD (111 aa).

This sequence belongs to the ELL/occludin family.

The polypeptide is Occludin/ELL domain-containing protein 1 (OCEL1) (Homo sapiens (Human)).